Consider the following 451-residue polypeptide: Trigger factor (451 aa).

Positions 165-250 constitute a PPIase FKBP-type domain; sequence DDKLTIDFEG…LRQIQVREAL (86 aa).

The protein belongs to the FKBP-type PPIase family. Tig subfamily.

The protein localises to the cytoplasm. The enzyme catalyses [protein]-peptidylproline (omega=180) = [protein]-peptidylproline (omega=0). Functionally, involved in protein export. Acts as a chaperone by maintaining the newly synthesized protein in an open conformation. Functions as a peptidyl-prolyl cis-trans isomerase. The sequence is that of Trigger factor (tig) from Helicobacter pylori (strain J99 / ATCC 700824) (Campylobacter pylori J99).